Reading from the N-terminus, the 141-residue chain is Large ribosomal subunit protein uL23B (141 aa).

A disordered region spans residues 1-22 (MSVGKAKGAQKTVQKGIHNKVA).

It belongs to the universal ribosomal protein uL23 family. Component of the large ribosomal subunit (LSU). Mature yeast ribosomes consist of a small (40S) and a large (60S) subunit. The 40S small subunit contains 1 molecule of ribosomal RNA (18S rRNA) and at least 33 different proteins. The large 60S subunit contains 3 rRNA molecules (25S, 5.8S and 5S rRNA) and at least 46 different proteins. uL23 is associated with the polypeptide exit tunnel.

Its subcellular location is the cytoplasm. Functionally, this protein binds to a specific region on the 26S rRNA. In terms of biological role, component of the ribosome, a large ribonucleoprotein complex responsible for the synthesis of proteins in the cell. The small ribosomal subunit (SSU) binds messenger RNAs (mRNAs) and translates the encoded message by selecting cognate aminoacyl-transfer RNA (tRNA) molecules. The large subunit (LSU) contains the ribosomal catalytic site termed the peptidyl transferase center (PTC), which catalyzes the formation of peptide bonds, thereby polymerizing the amino acids delivered by tRNAs into a polypeptide chain. The nascent polypeptides leave the ribosome through a tunnel in the LSU and interact with protein factors that function in enzymatic processing, targeting, and the membrane insertion of nascent chains at the exit of the ribosomal tunnel. uL23 is a major component of the universal docking site for these factors at the polypeptide exit tunnel. This Schizosaccharomyces pombe (strain 972 / ATCC 24843) (Fission yeast) protein is Large ribosomal subunit protein uL23B (rpl2502).